The primary structure comprises 486 residues: F-box protein At1g80960 (486 aa).

The region spanning 49–97 (VDWISKLPDDVLLIILSRLSTEEAIRTSVVSKRWEHVWNQMSHLVFDMR) is the F-box domain.

This is F-box protein At1g80960 from Arabidopsis thaliana (Mouse-ear cress).